The following is a 524-amino-acid chain: Peptide chain release factor 3 (524 aa).

Residues 11–278 form the tr-type G domain; sequence AKRRTFAIIS…SFVQYAPEPG (268 aa). GTP-binding positions include 20 to 27, 88 to 92, and 142 to 145; these read SHPDAGKT, DTPGH, and NKLD.

This sequence belongs to the TRAFAC class translation factor GTPase superfamily. Classic translation factor GTPase family. PrfC subfamily.

The protein localises to the cytoplasm. Functionally, increases the formation of ribosomal termination complexes and stimulates activities of RF-1 and RF-2. It binds guanine nucleotides and has strong preference for UGA stop codons. It may interact directly with the ribosome. The stimulation of RF-1 and RF-2 is significantly reduced by GTP and GDP, but not by GMP. In Lacticaseibacillus casei (strain BL23) (Lactobacillus casei), this protein is Peptide chain release factor 3.